Consider the following 129-residue polypeptide: uncharacterized protein (129 aa).

This is an uncharacterized protein from Lepidoptera (butterflies and moths).